Consider the following 340-residue polypeptide: Biotin synthase (340 aa).

Residues 1–21 (MDAASVSFGSGHDLSSQPRHD) are disordered. A Radical SAM core domain is found at 53–272 (NHVETANLLS…IAVARIMMPR (220 aa)). [4Fe-4S] cluster-binding residues include cysteine 68, cysteine 72, and cysteine 75. [2Fe-2S] cluster-binding residues include cysteine 112, cysteine 143, cysteine 203, and arginine 276.

The protein belongs to the radical SAM superfamily. Biotin synthase family. In terms of assembly, homodimer. [4Fe-4S] cluster serves as cofactor. [2Fe-2S] cluster is required as a cofactor.

The enzyme catalyses (4R,5S)-dethiobiotin + (sulfur carrier)-SH + 2 reduced [2Fe-2S]-[ferredoxin] + 2 S-adenosyl-L-methionine = (sulfur carrier)-H + biotin + 2 5'-deoxyadenosine + 2 L-methionine + 2 oxidized [2Fe-2S]-[ferredoxin]. It participates in cofactor biosynthesis; biotin biosynthesis; biotin from 7,8-diaminononanoate: step 2/2. Catalyzes the conversion of dethiobiotin (DTB) to biotin by the insertion of a sulfur atom into dethiobiotin via a radical-based mechanism. This chain is Biotin synthase, found in Nitrobacter hamburgensis (strain DSM 10229 / NCIMB 13809 / X14).